Consider the following 68-residue polypeptide: Negative regulatory protein YxlD (68 aa).

2 helical membrane-spanning segments follow: residues 5–25 (EIII…FLFI) and 37–57 (WGIV…FFVI).

The protein localises to the cell membrane. Together with YxlE, is important for negative regulation of sigma Y activity, being the major negative regulator. In Bacillus subtilis (strain 168), this protein is Negative regulatory protein YxlD (yxlD).